Reading from the N-terminus, the 569-residue chain is Sulfite reductase [NADPH] hemoprotein beta-component (569 aa).

Positions 433, 439, 478, and 482 each coordinate [4Fe-4S] cluster. Cys482 is a siroheme binding site.

This sequence belongs to the nitrite and sulfite reductase 4Fe-4S domain family. As to quaternary structure, alpha(8)-beta(8). The alpha component is a flavoprotein, the beta component is a hemoprotein. It depends on siroheme as a cofactor. [4Fe-4S] cluster serves as cofactor.

The catalysed reaction is hydrogen sulfide + 3 NADP(+) + 3 H2O = sulfite + 3 NADPH + 4 H(+). It participates in sulfur metabolism; hydrogen sulfide biosynthesis; hydrogen sulfide from sulfite (NADPH route): step 1/1. Its function is as follows. Component of the sulfite reductase complex that catalyzes the 6-electron reduction of sulfite to sulfide. This is one of several activities required for the biosynthesis of L-cysteine from sulfate. The protein is Sulfite reductase [NADPH] hemoprotein beta-component of Shewanella sediminis (strain HAW-EB3).